Consider the following 184-residue polypeptide: MGVIQAIDRLMTNPIPDGQVDDILRPQGESPLLQKGYVTTSVDALLNWARTGSMWPMTFGLACCAVEMMHAGAARLDLDRYGIVFRPSPRQSDVMIVAGTLVNKMAPALRKVYDQMPDPKWVISMGSCANGGGYYHYSYSVVRGCDRIVPVDVYVPGCPPTAEALVYGILQLQKKIWRTQTNAG.

Cys63, Cys64, Cys128, and Cys158 together coordinate [4Fe-4S] cluster.

Belongs to the complex I 20 kDa subunit family. NDH-1 is composed of 14 different subunits. Subunits NuoB, C, D, E, F, and G constitute the peripheral sector of the complex. [4Fe-4S] cluster is required as a cofactor.

It is found in the cell inner membrane. It carries out the reaction a quinone + NADH + 5 H(+)(in) = a quinol + NAD(+) + 4 H(+)(out). NDH-1 shuttles electrons from NADH, via FMN and iron-sulfur (Fe-S) centers, to quinones in the respiratory chain. Couples the redox reaction to proton translocation (for every two electrons transferred, four hydrogen ions are translocated across the cytoplasmic membrane), and thus conserves the redox energy in a proton gradient. This Xylella fastidiosa (strain 9a5c) protein is NADH-quinone oxidoreductase subunit B.